We begin with the raw amino-acid sequence, 324 residues long: Fructose-1,6-bisphosphatase class 1 (324 aa).

Residues E88, D107, L109, and D110 each coordinate Mg(2+). Substrate-binding positions include 110–113, N199, and K265; that span reads DGSS. E271 lines the Mg(2+) pocket.

This sequence belongs to the FBPase class 1 family. As to quaternary structure, homotetramer. Mg(2+) is required as a cofactor.

The protein localises to the cytoplasm. It carries out the reaction beta-D-fructose 1,6-bisphosphate + H2O = beta-D-fructose 6-phosphate + phosphate. The protein operates within carbohydrate biosynthesis; gluconeogenesis. This is Fructose-1,6-bisphosphatase class 1 from Neisseria gonorrhoeae (strain ATCC 700825 / FA 1090).